We begin with the raw amino-acid sequence, 370 residues long: MEYAIEMRRELHKIPEPGFKEFKTQAFILDQIRSYPEDRVSYDTFETGVFVRVKGLTGNRTIGYRADIDGLPIEEATGLPFCSEHPGFMHACGHDVHASIALGLLRRIVELPVMDDVVFLFQPAEEGPGGAEPMIKSPLFEKYRPSEMYGLHVAPEYPVGTIASRPGVLFASAREVHITIYGQSGHAAFPHLTIDTVVAQAALIMQLQTIVSRSINPMNCSVITIGKVDAGIRENVIAGRALLDGTMRALNGTDMEKLEQRVRDIIRGIEASFGVKIDLQFGNRYYEVVNDQRVVDKFSSFVKMNANYIECDAAMTGEDFGFMLKEIPGMMFWLGVNNATSGLHQPTLNPDEEAIPFVINLLDHYFREYV.

Asp67 is a catalytic residue. Glu126 functions as the Proton acceptor in the catalytic mechanism.

The protein belongs to the peptidase M20A family. N-acetyldiaminopimelate deacetylase subfamily.

The catalysed reaction is N-acetyl-(2S,6S)-2,6-diaminopimelate + H2O = (2S,6S)-2,6-diaminopimelate + acetate. It functions in the pathway amino-acid biosynthesis; L-lysine biosynthesis via DAP pathway; LL-2,6-diaminopimelate from (S)-tetrahydrodipicolinate (acetylase route): step 3/3. In terms of biological role, catalyzes the conversion of N-acetyl-diaminopimelate to diaminopimelate and acetate. The protein is N-acetyldiaminopimelate deacetylase of Exiguobacterium sibiricum (strain DSM 17290 / CCUG 55495 / CIP 109462 / JCM 13490 / 255-15).